The sequence spans 446 residues: tRNA-2-methylthio-N(6)-dimethylallyladenosine synthase (446 aa).

An MTTase N-terminal domain is found at 2–122; that stretch reads KKAYVKSYGC…LPDLLRQSRE (121 aa). [4Fe-4S] cluster is bound by residues C11, C47, C85, C157, C161, and C164. The Radical SAM core domain occupies 143 to 375; it reads RNRGVTGFLT…QQLLDQQRHA (233 aa). The 63-residue stretch at 378–440 folds into the TRAM domain; sequence AAAVGTVAEI…SNSLFGEVLE (63 aa).

Belongs to the methylthiotransferase family. MiaB subfamily. As to quaternary structure, monomer. [4Fe-4S] cluster serves as cofactor.

Its subcellular location is the cytoplasm. It catalyses the reaction N(6)-dimethylallyladenosine(37) in tRNA + (sulfur carrier)-SH + AH2 + 2 S-adenosyl-L-methionine = 2-methylsulfanyl-N(6)-dimethylallyladenosine(37) in tRNA + (sulfur carrier)-H + 5'-deoxyadenosine + L-methionine + A + S-adenosyl-L-homocysteine + 2 H(+). Functionally, catalyzes the methylthiolation of N6-(dimethylallyl)adenosine (i(6)A), leading to the formation of 2-methylthio-N6-(dimethylallyl)adenosine (ms(2)i(6)A) at position 37 in tRNAs that read codons beginning with uridine. This Methylorubrum populi (strain ATCC BAA-705 / NCIMB 13946 / BJ001) (Methylobacterium populi) protein is tRNA-2-methylthio-N(6)-dimethylallyladenosine synthase.